An 840-amino-acid chain; its full sequence is Leucine--tRNA ligase (840 aa).

Positions 44–55 (PYPSANGLHVGH) match the 'HIGH' region motif. Positions 617–621 (KMSKS) match the 'KMSKS' region motif. An ATP-binding site is contributed by K620.

It belongs to the class-I aminoacyl-tRNA synthetase family.

It is found in the cytoplasm. The enzyme catalyses tRNA(Leu) + L-leucine + ATP = L-leucyl-tRNA(Leu) + AMP + diphosphate. The chain is Leucine--tRNA ligase from Borrelia garinii subsp. bavariensis (strain ATCC BAA-2496 / DSM 23469 / PBi) (Borreliella bavariensis).